A 489-amino-acid chain; its full sequence is GTPase Der (489 aa).

EngA-type G domains lie at 3–166 (PVVA…FDDV) and 201–374 (IKLA…DSST). GTP is bound by residues 9–16 (GRPNVGKS), 56–60 (DTGGI), 118–121 (NKTD), 207–214 (GRPNVGKS), 254–258 (DTAGV), and 319–322 (NKWD). The KH-like domain occupies 375-459 (KRISTSILTR…PIRIEFREGT (85 aa)).

Belongs to the TRAFAC class TrmE-Era-EngA-EngB-Septin-like GTPase superfamily. EngA (Der) GTPase family. As to quaternary structure, associates with the 50S ribosomal subunit.

Functionally, GTPase that plays an essential role in the late steps of ribosome biogenesis. This Psychromonas ingrahamii (strain DSM 17664 / CCUG 51855 / 37) protein is GTPase Der.